A 416-amino-acid chain; its full sequence is UDP-N-acetylmuramoylalanine--D-glutamate ligase (416 aa).

104 to 110 (GSNGKST) is an ATP binding site.

This sequence belongs to the MurCDEF family.

It localises to the cytoplasm. The catalysed reaction is UDP-N-acetyl-alpha-D-muramoyl-L-alanine + D-glutamate + ATP = UDP-N-acetyl-alpha-D-muramoyl-L-alanyl-D-glutamate + ADP + phosphate + H(+). The protein operates within cell wall biogenesis; peptidoglycan biosynthesis. Cell wall formation. Catalyzes the addition of glutamate to the nucleotide precursor UDP-N-acetylmuramoyl-L-alanine (UMA). This Francisella tularensis subsp. holarctica (strain FTNF002-00 / FTA) protein is UDP-N-acetylmuramoylalanine--D-glutamate ligase.